Consider the following 273-residue polypeptide: 3-methyl-2-oxobutanoate hydroxymethyltransferase (273 aa).

Residues D53 and D92 each contribute to the Mg(2+) site. 3-methyl-2-oxobutanoate is bound by residues 53 to 54 (DS), D92, and K120. E122 provides a ligand contact to Mg(2+). Catalysis depends on E189, which acts as the Proton acceptor.

The protein belongs to the PanB family. As to quaternary structure, homodecamer; pentamer of dimers. Mg(2+) serves as cofactor.

Its subcellular location is the cytoplasm. The enzyme catalyses 3-methyl-2-oxobutanoate + (6R)-5,10-methylene-5,6,7,8-tetrahydrofolate + H2O = 2-dehydropantoate + (6S)-5,6,7,8-tetrahydrofolate. It functions in the pathway cofactor biosynthesis; (R)-pantothenate biosynthesis; (R)-pantoate from 3-methyl-2-oxobutanoate: step 1/2. Its function is as follows. Catalyzes the reversible reaction in which hydroxymethyl group from 5,10-methylenetetrahydrofolate is transferred onto alpha-ketoisovalerate to form ketopantoate. This chain is 3-methyl-2-oxobutanoate hydroxymethyltransferase, found in Cupriavidus pinatubonensis (strain JMP 134 / LMG 1197) (Cupriavidus necator (strain JMP 134)).